A 324-amino-acid polypeptide reads, in one-letter code: Uroporphyrinogen decarboxylase (324 aa).

Residues 14 to 18 (RQAGR), phenylalanine 32, aspartate 63, tyrosine 136, serine 191, and histidine 302 contribute to the substrate site.

The protein belongs to the uroporphyrinogen decarboxylase family. As to quaternary structure, homodimer.

The protein localises to the cytoplasm. It catalyses the reaction uroporphyrinogen III + 4 H(+) = coproporphyrinogen III + 4 CO2. It participates in porphyrin-containing compound metabolism; protoporphyrin-IX biosynthesis; coproporphyrinogen-III from 5-aminolevulinate: step 4/4. Its function is as follows. Catalyzes the decarboxylation of four acetate groups of uroporphyrinogen-III to yield coproporphyrinogen-III. The chain is Uroporphyrinogen decarboxylase from Neorickettsia sennetsu (strain ATCC VR-367 / Miyayama) (Ehrlichia sennetsu).